The following is a 455-amino-acid chain: Probable hexose phosphate transport protein (455 aa).

Transmembrane regions (helical) follow at residues 34-54 (IFYS…SFTF), 70-90 (LGII…VSGV), 113-133 (IFFG…LNGW), 161-181 (VWST…GFII), and 185-205 (GWRG…LVLI). A disordered region spans residues 219–242 (PIEKYKRDPHHAHHEGKSASEGTE). 6 helical membrane passes run 257-277 (YVLT…IYIV), 302-322 (FCVS…GWLS), 331-351 (GPMN…MWFS), 363-383 (LLFV…LAAA), 394-414 (ASGF…YPLG), and 424-444 (GFFI…LPTW).

This sequence belongs to the major facilitator superfamily. Organophosphate:Pi antiporter (OPA) (TC 2.A.1.4) family.

The protein localises to the cell membrane. Its function is as follows. Transport protein for sugar phosphate uptake. The sequence is that of Probable hexose phosphate transport protein (uhpC) from Chlamydia pneumoniae (Chlamydophila pneumoniae).